We begin with the raw amino-acid sequence, 1099 residues long: Carbamoyl phosphate synthase large chain (1099 aa).

The segment at 1 to 402 is carboxyphosphate synthetic domain; the sequence is MPKRTDLKSV…ALQKALRSLE (402 aa). ATP-binding residues include arginine 129, arginine 169, glycine 175, glycine 176, glutamate 208, isoleucine 210, glutamate 215, glycine 241, valine 242, histidine 243, glutamine 285, and glutamate 299. One can recognise an ATP-grasp 1 domain in the interval 133 to 328; sequence KGVVERCGAE…IAKIATKLSL (196 aa). Glutamine 285, glutamate 299, and asparagine 301 together coordinate Mg(2+). 3 residues coordinate Mn(2+): glutamine 285, glutamate 299, and asparagine 301. An oligomerization domain region spans residues 403-546; it reads QKGSQLDFSH…YHYSSYDEED (144 aa). Residues 547 to 950 form a carbamoyl phosphate synthetic domain region; that stretch reads EVALHSKPSI…AFAKSQAAAN (404 aa). Residues 677–868 form the ATP-grasp 2 domain; sequence SRVLDEAGLI…MAKAAALIGT (192 aa). Residues arginine 713, arginine 752, leucine 754, glutamate 759, glycine 784, isoleucine 785, histidine 786, serine 787, glutamine 827, and glutamate 839 each contribute to the ATP site. The Mg(2+) site is built by glutamine 827, glutamate 839, and asparagine 841. Mn(2+) is bound by residues glutamine 827, glutamate 839, and asparagine 841. Residues 951–1099 enclose the MGS-like domain; it reads NALPTEGKIF…AENLKALQNG (149 aa). Residues 951–1099 form an allosteric domain region; it reads NALPTEGKIF…AENLKALQNG (149 aa).

It belongs to the CarB family. In terms of assembly, composed of two chains; the small (or glutamine) chain promotes the hydrolysis of glutamine to ammonia, which is used by the large (or ammonia) chain to synthesize carbamoyl phosphate. Tetramer of heterodimers (alpha,beta)4. Mg(2+) is required as a cofactor. Requires Mn(2+) as cofactor.

The enzyme catalyses hydrogencarbonate + L-glutamine + 2 ATP + H2O = carbamoyl phosphate + L-glutamate + 2 ADP + phosphate + 2 H(+). It carries out the reaction hydrogencarbonate + NH4(+) + 2 ATP = carbamoyl phosphate + 2 ADP + phosphate + 2 H(+). Its pathway is amino-acid biosynthesis; L-arginine biosynthesis; carbamoyl phosphate from bicarbonate: step 1/1. It functions in the pathway pyrimidine metabolism; UMP biosynthesis via de novo pathway; (S)-dihydroorotate from bicarbonate: step 1/3. Its function is as follows. Large subunit of the glutamine-dependent carbamoyl phosphate synthetase (CPSase). CPSase catalyzes the formation of carbamoyl phosphate from the ammonia moiety of glutamine, carbonate, and phosphate donated by ATP, constituting the first step of 2 biosynthetic pathways, one leading to arginine and/or urea and the other to pyrimidine nucleotides. The large subunit (synthetase) binds the substrates ammonia (free or transferred from glutamine from the small subunit), hydrogencarbonate and ATP and carries out an ATP-coupled ligase reaction, activating hydrogencarbonate by forming carboxy phosphate which reacts with ammonia to form carbamoyl phosphate. In Arthrobacter sp. (strain FB24), this protein is Carbamoyl phosphate synthase large chain.